A 427-amino-acid chain; its full sequence is Serine--tRNA ligase 2 (427 aa).

Over residues 35–53 the composition is skewed to basic and acidic residues; that stretch reads RRRSEAQAEVTRLRTELNR. Positions 35 to 72 are disordered; that stretch reads RRRSEAQAEVTRLRTELNRTSRARGRSGPPSEEEKEAA. 230 to 232 provides a ligand contact to L-serine; it reads TAE. Residue 261-263 coordinates ATP; it reads RAE. Glu-284 contacts L-serine. Residue 348-351 coordinates ATP; that stretch reads EISS. Ser-383 serves as a coordination point for L-serine.

This sequence belongs to the class-II aminoacyl-tRNA synthetase family. Type-1 seryl-tRNA synthetase subfamily. In terms of assembly, homodimer. The tRNA molecule binds across the dimer.

Its subcellular location is the cytoplasm. The enzyme catalyses tRNA(Ser) + L-serine + ATP = L-seryl-tRNA(Ser) + AMP + diphosphate + H(+). It catalyses the reaction tRNA(Sec) + L-serine + ATP = L-seryl-tRNA(Sec) + AMP + diphosphate + H(+). The protein operates within aminoacyl-tRNA biosynthesis; selenocysteinyl-tRNA(Sec) biosynthesis; L-seryl-tRNA(Sec) from L-serine and tRNA(Sec): step 1/1. Its function is as follows. Catalyzes the attachment of serine to tRNA(Ser). Is also able to aminoacylate tRNA(Sec) with serine, to form the misacylated tRNA L-seryl-tRNA(Sec), which will be further converted into selenocysteinyl-tRNA(Sec). This Streptomyces avermitilis (strain ATCC 31267 / DSM 46492 / JCM 5070 / NBRC 14893 / NCIMB 12804 / NRRL 8165 / MA-4680) protein is Serine--tRNA ligase 2.